Consider the following 141-residue polypeptide: Large ribosomal subunit protein uL11 (141 aa).

The protein belongs to the universal ribosomal protein uL11 family. In terms of assembly, part of the ribosomal stalk of the 50S ribosomal subunit. Interacts with L10 and the large rRNA to form the base of the stalk. L10 forms an elongated spine to which L12 dimers bind in a sequential fashion forming a multimeric L10(L12)X complex. Post-translationally, one or more lysine residues are methylated.

Its function is as follows. Forms part of the ribosomal stalk which helps the ribosome interact with GTP-bound translation factors. In Prochlorococcus marinus (strain MIT 9215), this protein is Large ribosomal subunit protein uL11.